A 200-amino-acid polypeptide reads, in one-letter code: Large ribosomal subunit protein uL4 (200 aa).

Residues 43–72 (RAQKTRAEVSGSGKKPWRQKGTGRARSGDI) are disordered.

It belongs to the universal ribosomal protein uL4 family. As to quaternary structure, part of the 50S ribosomal subunit.

Functionally, one of the primary rRNA binding proteins, this protein initially binds near the 5'-end of the 23S rRNA. It is important during the early stages of 50S assembly. It makes multiple contacts with different domains of the 23S rRNA in the assembled 50S subunit and ribosome. Its function is as follows. Forms part of the polypeptide exit tunnel. In Haemophilus ducreyi (strain 35000HP / ATCC 700724), this protein is Large ribosomal subunit protein uL4.